The following is a 152-amino-acid chain: 3-dehydroquinate dehydratase (152 aa).

Tyrosine 26 (proton acceptor) is an active-site residue. Substrate-binding residues include asparagine 77, histidine 83, and aspartate 90. The active-site Proton donor is histidine 103. Residues 104-105 and arginine 114 each bind substrate; that span reads LS.

Belongs to the type-II 3-dehydroquinase family. Homododecamer.

It catalyses the reaction 3-dehydroquinate = 3-dehydroshikimate + H2O. Its pathway is metabolic intermediate biosynthesis; chorismate biosynthesis; chorismate from D-erythrose 4-phosphate and phosphoenolpyruvate: step 3/7. Catalyzes a trans-dehydration via an enolate intermediate. This Tolumonas auensis (strain DSM 9187 / NBRC 110442 / TA 4) protein is 3-dehydroquinate dehydratase.